A 47-amino-acid chain; its full sequence is MADSALQQQLDEVRALLTRARELFGPNPIEPPTDIAPDPDSTKTWLI.

Residues 24 to 47 (FGPNPIEPPTDIAPDPDSTKTWLI) form a disordered region.

This is an uncharacterized protein from Mycobacterium tuberculosis (strain ATCC 25618 / H37Rv).